Here is a 444-residue protein sequence, read N- to C-terminus: uncharacterized protein (444 aa).

N6-(pyridoxal phosphate)lysine is present on Lys268.

It belongs to the class-III pyridoxal-phosphate-dependent aminotransferase family. Pyridoxal 5'-phosphate serves as cofactor.

This is an uncharacterized protein from Bacillus subtilis (strain 168).